A 104-amino-acid chain; its full sequence is Complex III assembly factor LYRM7 (104 aa).

Belongs to the complex I LYR family. In terms of assembly, interacts with UQCRFS1.

It localises to the mitochondrion matrix. Functionally, assembly factor required for Rieske Fe-S protein UQCRFS1 incorporation into the cytochrome b-c1 (CIII) complex. Functions as a chaperone, binding to this subunit within the mitochondrial matrix and stabilizing it prior to its translocation and insertion into the late CIII dimeric intermediate within the mitochondrial inner membrane. The protein is Complex III assembly factor LYRM7 (lyrm7) of Xenopus tropicalis (Western clawed frog).